Consider the following 349-residue polypeptide: MNPYVLTILLSSLGLGTILTFASSHWLLAWMGLEINTLAIIPIMAQQSHPRAIEATTKYFLTQATAAAMILFASTTNAWLVGEWEIHQLSHPLATTTVMLALALKLGLAPVHFWLPEVLQGLELTTGLILSTWQKLAPFALMIQVAPTINSSLLIAMGLLSTLVGGWGGLNQTQLRKILAYSSIAHLGWMVLILQYAPSLTLLSLFLYIIMTSSAFLTLKTNNSLTINTLATSWTKSPTLAALTALVLLSLGGLPPLSGFMPKWLILQELTKQGLPLSATLAAMTALLSLYFYLRLCYAMTLTIYPNTLTATAPWRLNFTLITLPLSIITILALGLLPLTPAVTTLLTL.

Transmembrane regions (helical) follow at residues 3–23, 25–45, 66–86, 98–118, 149–171, 178–197, 202–219, 240–260, 274–294, and 319–339; these read PYVL…TFAS, HWLL…PIMA, AAAM…EWEI, VMLA…LPEV, INSS…GGLN, ILAY…LQYA, LLSL…FLTL, LAAL…LSGF, GLPL…YFYL, and FTLI…LLPL.

The protein belongs to the complex I subunit 2 family.

The protein resides in the mitochondrion inner membrane. The catalysed reaction is a ubiquinone + NADH + 5 H(+)(in) = a ubiquinol + NAD(+) + 4 H(+)(out). Its function is as follows. Core subunit of the mitochondrial membrane respiratory chain NADH dehydrogenase (Complex I) that is believed to belong to the minimal assembly required for catalysis. Complex I functions in the transfer of electrons from NADH to the respiratory chain. The immediate electron acceptor for the enzyme is believed to be ubiquinone. This Salmo salar (Atlantic salmon) protein is NADH-ubiquinone oxidoreductase chain 2 (MT-ND2).